The sequence spans 532 residues: 2,3-bisphosphoglycerate-independent phosphoglycerate mutase (532 aa).

Mn(2+) contacts are provided by Asp13 and Ser63. The active-site Phosphoserine intermediate is Ser63. Substrate is bound by residues His124, 154 to 155 (RD), Arg187, Arg193, 262 to 265 (RPDR), and Lys343. Asp421, His425, Asp463, His464, and His481 together coordinate Mn(2+).

This sequence belongs to the BPG-independent phosphoglycerate mutase family. In terms of assembly, monomer. The cofactor is Mn(2+).

The enzyme catalyses (2R)-2-phosphoglycerate = (2R)-3-phosphoglycerate. It functions in the pathway carbohydrate degradation; glycolysis; pyruvate from D-glyceraldehyde 3-phosphate: step 3/5. Functionally, catalyzes the interconversion of 2-phosphoglycerate and 3-phosphoglycerate. This Mesoplasma florum (strain ATCC 33453 / NBRC 100688 / NCTC 11704 / L1) (Acholeplasma florum) protein is 2,3-bisphosphoglycerate-independent phosphoglycerate mutase.